A 25-amino-acid chain; its full sequence is SEDCTPWTATPITVLAGCRDYVGEQ.

As to quaternary structure, monomer or homodimer. Post-translationally, may exist both in a glycosylated and in an unglycosylated form.

Its subcellular location is the secreted. In terms of biological role, inhibits alpha-amylases but not trypsin. Is more effective against insect alpha-amylases than those of mammals. The sequence is that of Alpha-amylase inhibitor from Secale cereale (Rye).